Here is a 308-residue protein sequence, read N- to C-terminus: Inosose dehydratase (308 aa).

Belongs to the IolE/MocC family. It depends on glutathione as a cofactor. Co(2+) is required as a cofactor. Mn(2+) serves as cofactor.

The enzyme catalyses scyllo-inosose = 3D-3,5/4-trihydroxycyclohexane-1,2-dione + H2O. It functions in the pathway polyol metabolism; myo-inositol degradation into acetyl-CoA; acetyl-CoA from myo-inositol: step 2/7. Functionally, catalyzes the dehydration of inosose (2-keto-myo-inositol, 2KMI or 2,4,6/3,5-pentahydroxycyclohexanone) to 3D-(3,5/4)-trihydroxycyclohexane-1,2-dione (D-2,3-diketo-4-deoxy-epi-inositol). This chain is Inosose dehydratase, found in Geobacillus kaustophilus (strain HTA426).